The primary structure comprises 183 residues: 3-hydroxydecanoyl-[acyl-carrier-protein] dehydratase (183 aa).

Residue His-77 is part of the active site.

This sequence belongs to the thioester dehydratase family. FabA subfamily. As to quaternary structure, homodimer.

Its subcellular location is the cytoplasm. The enzyme catalyses a (3R)-hydroxyacyl-[ACP] = a (2E)-enoyl-[ACP] + H2O. The catalysed reaction is (3R)-hydroxydecanoyl-[ACP] = (2E)-decenoyl-[ACP] + H2O. It carries out the reaction (2E)-decenoyl-[ACP] = (3Z)-decenoyl-[ACP]. The protein operates within lipid metabolism; fatty acid biosynthesis. Its function is as follows. Necessary for the introduction of cis unsaturation into fatty acids. Catalyzes the dehydration of (3R)-3-hydroxydecanoyl-ACP to E-(2)-decenoyl-ACP and then its isomerization to Z-(3)-decenoyl-ACP. Can catalyze the dehydratase reaction for beta-hydroxyacyl-ACPs with saturated chain lengths up to 16:0, being most active on intermediate chain length. The chain is 3-hydroxydecanoyl-[acyl-carrier-protein] dehydratase from Hahella chejuensis (strain KCTC 2396).